Here is a 437-residue protein sequence, read N- to C-terminus: Phosphomethylpyrimidine synthase (437 aa).

Substrate is bound by residues asparagine 69, methionine 98, tyrosine 127, histidine 163, 185–187, 226–229, and glutamate 265; these read SRG and DACR. Histidine 269 lines the Zn(2+) pocket. A substrate-binding site is contributed by tyrosine 292. Histidine 333 is a Zn(2+) binding site. [4Fe-4S] cluster is bound by residues cysteine 409, cysteine 412, and cysteine 416.

Belongs to the ThiC family. Requires [4Fe-4S] cluster as cofactor.

The enzyme catalyses 5-amino-1-(5-phospho-beta-D-ribosyl)imidazole + S-adenosyl-L-methionine = 4-amino-2-methyl-5-(phosphooxymethyl)pyrimidine + CO + 5'-deoxyadenosine + formate + L-methionine + 3 H(+). Its pathway is cofactor biosynthesis; thiamine diphosphate biosynthesis. Its function is as follows. Catalyzes the synthesis of the hydroxymethylpyrimidine phosphate (HMP-P) moiety of thiamine from aminoimidazole ribotide (AIR) in a radical S-adenosyl-L-methionine (SAM)-dependent reaction. The sequence is that of Phosphomethylpyrimidine synthase from Clostridium kluyveri (strain NBRC 12016).